We begin with the raw amino-acid sequence, 1121 residues long: Putative ATP-dependent RNA helicase ECM32 (1121 aa).

Residues 157–187 are disordered; sequence NSTRKPRKKGGRRVGRGKKGRKGAKIKKEKK. Residues 160 to 184 show a composition bias toward basic residues; sequence RKPRKKGGRRVGRGKKGRKGAKIKK. Ser227 is modified (phosphoserine). The segment at 233–452 is disordered; the sequence is AKVSKSETSR…NQEKNNGKTK (220 aa). A compositionally biased stretch (basic residues) spans 251 to 263; sequence NKGKGNKANHKKN. Polar residues predominate over residues 278–287; the sequence is IRNNVRNSQP. Positions 307 to 316 are enriched in basic and acidic residues; the sequence is GKNESVDKHQ. Positions 323–336 are enriched in low complexity; sequence LNGNGSGSTNTTGL. A compositionally biased stretch (basic and acidic residues) spans 342–363; sequence DHAGQKTKGNDKTGNKNPREAK. Polar residues predominate over residues 376–413; the sequence is KSNNQPNKGTSRWTIGSDTESSREPSISPNENTTSITK. Ser392 is subject to Phosphoserine. Positions 426–452 are enriched in basic and acidic residues; the sequence is LNEKSKTTTMPKKLETKNQEKNNGKTK. Phosphothreonine is present on Thr465. 670–677 is an ATP binding site; it reads GPPGTGKT.

The protein belongs to the DNA2/NAM7 helicase family. Interacts with the peptidyl release factors SUP35 and weakly with SUP45.

Its subcellular location is the cytoplasm. The enzyme catalyses ATP + H2O = ADP + phosphate + H(+). Its function is as follows. Probable RNA helicase, which may be involved in modulation of the translation termination process. Probably unwinds double-stranded RNA. In vitro, unwinds covalently closed, circular DNA in the presence of a DNA topoisomerase TOP1 and replication factor-A protein RFA1. The chain is Putative ATP-dependent RNA helicase ECM32 (ECM32) from Saccharomyces cerevisiae (strain ATCC 204508 / S288c) (Baker's yeast).